A 481-amino-acid polypeptide reads, in one-letter code: Neuronal acetylcholine receptor subunit eat-2 (481 aa).

The first 19 residues, 1-19, serve as a signal peptide directing secretion; that stretch reads MFLLLQILYILLFLNLADT. Over 20–235 the chain is Extracellular; sequence SDDEYRLLKD…MHLKRRTMYY (216 aa). An N-linked (GlcNAc...) asparagine glycan is attached at Asn-93. Cys-147 and Cys-161 form a disulfide bridge. 3 helical membrane-spanning segments follow: residues 236 to 256, 264 to 284, and 292 to 312; these read GLNWIIPSILISLSNILGFTM, VTLQITNFLSIMVFLAMVSEV, and IPIIAAFFSFAIVILGVSICV. The Cytoplasmic portion of the chain corresponds to 313 to 443; that stretch reads SLITVNIFYR…WRFMAMVIDR (131 aa). The interval 356–384 is disordered; it reads KPKREKKKEEEEDEESNAGGKEEESELIS. The helical transmembrane segment at 444 to 464 threads the bilayer; it reads ASLFLFTGLIFGTTFVIFAAC.

This sequence belongs to the ligand-gated ion channel (TC 1.A.9) family. Acetylcholine receptor (TC 1.A.9.1) subfamily. As to quaternary structure, neuronal AChR seems to be composed of two different type of subunits: alpha and beta.

It localises to the postsynaptic cell membrane. Its subcellular location is the cell membrane. Its function is as follows. After binding acetylcholine, the AChR responds by an extensive change in conformation that affects all subunits and leads to opening of an ion-conducting channel across the plasma membrane. Nicotinic acetylcholine receptor in the MC pharyngeal motor neuron involved in pharyngeal pumping. Has a role in the determination of life span possibly via calorific restriction which affects growth rate, although this is independent of metabolic activity. This is Neuronal acetylcholine receptor subunit eat-2 from Caenorhabditis briggsae.